Here is a 341-residue protein sequence, read N- to C-terminus: MGNIQMSTISIAVDAMGGDFAPEAVVGGLNFALMNLLVDHNISFNIYGKEDCVLPVLDKYKTVRDNSVFINTSDVVLANDKPSFALRKRKSSSMWCAIDSIKTGTSSGVVSCGNTGALMAISRFVLGTLPNIDRPAICTKVPSKFQDFVLLDLGANIECSANSLFQFAIMGGAFAKAVLNIPNPKVALLNVGQEEIKGTGVIREAFSLLKEVEGKINFCGYVEPKDMVDGKVDVVVTDGFCGNVVLKVSESIASTIASIFKESISESIVAKFAGLLLKPRLIKNFSKFNPKLHNGAMFLGLNGVVVKSHGNSDELAFANAVKVVVNAVIHDINAKIVHELN.

It belongs to the PlsX family. Homodimer. Probably interacts with PlsY.

The protein localises to the cytoplasm. It carries out the reaction a fatty acyl-[ACP] + phosphate = an acyl phosphate + holo-[ACP]. The protein operates within lipid metabolism; phospholipid metabolism. Catalyzes the reversible formation of acyl-phosphate (acyl-PO(4)) from acyl-[acyl-carrier-protein] (acyl-ACP). This enzyme utilizes acyl-ACP as fatty acyl donor, but not acyl-CoA. This chain is Phosphate acyltransferase, found in Ehrlichia ruminantium (strain Gardel).